Here is a 448-residue protein sequence, read N- to C-terminus: Adenylosuccinate synthetase (448 aa).

GTP-binding positions include 36–42 (GDEGKGK) and 64–66 (GHT). D37 serves as the catalytic Proton acceptor. Mg(2+) contacts are provided by D37 and G64. IMP-binding positions include 37–40 (DEGK), 62–65 (NAGH), T154, R168, N246, T261, and R325. H65 acts as the Proton donor in catalysis. 321-327 (VTTKRKR) is a binding site for substrate. GTP is bound by residues R327, 353-355 (KLD), and 436-438 (GVG).

It belongs to the adenylosuccinate synthetase family. In terms of assembly, homodimer. Requires Mg(2+) as cofactor.

It localises to the cytoplasm. It carries out the reaction IMP + L-aspartate + GTP = N(6)-(1,2-dicarboxyethyl)-AMP + GDP + phosphate + 2 H(+). The protein operates within purine metabolism; AMP biosynthesis via de novo pathway; AMP from IMP: step 1/2. Its function is as follows. Plays an important role in the de novo pathway and in the salvage pathway of purine nucleotide biosynthesis. Catalyzes the first committed step in the biosynthesis of AMP from IMP. This Drosophila pseudoobscura pseudoobscura (Fruit fly) protein is Adenylosuccinate synthetase.